We begin with the raw amino-acid sequence, 119 residues long: Anamorsin homolog (119 aa).

The segment at 33–119 (LKQATKGEDC…KVKLNLTDDI (87 aa)) is disordered. Positions 42, 49, 52, and 54 each coordinate [2Fe-2S] cluster. Residues 42 to 54 (CTTRRRACKNCVC) form a fe-S binding site A region. Residues C81, C84, C92, and C95 each coordinate [4Fe-4S] cluster. 2 short sequence motifs (cx2C motif) span residues 81–84 (CGNC) and 92–95 (CANC). The interval 81-95 (CGNCAKGDAFRCANC) is fe-S binding site B.

The protein belongs to the anamorsin family. As to quaternary structure, monomer. Requires [2Fe-2S] cluster as cofactor. The cofactor is [4Fe-4S] cluster.

It localises to the cytoplasm. The protein localises to the mitochondrion intermembrane space. Functionally, component of the cytosolic iron-sulfur (Fe-S) protein assembly (CIA) machinery. Required for the maturation of extramitochondrial Fe-S proteins. Part of an electron transfer chain functioning in an early step of cytosolic Fe-S biogenesis, facilitating the de novo assembly of a [4Fe-4S] cluster on the cytosolic Fe-S scaffold complex. Electrons are transferred from NADPH via a FAD- and FMN-containing diflavin oxidoreductase. Together with the diflavin oxidoreductase, also required for the assembly of the diferric tyrosyl radical cofactor of ribonucleotide reductase (RNR), probably by providing electrons for reduction during radical cofactor maturation in the catalytic small subunit. This chain is Anamorsin homolog, found in Leishmania braziliensis.